A 600-amino-acid polypeptide reads, in one-letter code: NADH-quinone oxidoreductase subunit C/D (600 aa).

Positions 1–190 (MVNNMTDLTA…SPFELTKAKQ (190 aa)) are NADH dehydrogenase I subunit C. The tract at residues 214 to 600 (DFMFLNLGPN…IDFVMSDVDR (387 aa)) is NADH dehydrogenase I subunit D.

The protein in the N-terminal section; belongs to the complex I 30 kDa subunit family. This sequence in the C-terminal section; belongs to the complex I 49 kDa subunit family. As to quaternary structure, NDH-1 is composed of 13 different subunits. Subunits NuoB, CD, E, F, and G constitute the peripheral sector of the complex.

It localises to the cell inner membrane. The enzyme catalyses a quinone + NADH + 5 H(+)(in) = a quinol + NAD(+) + 4 H(+)(out). In terms of biological role, NDH-1 shuttles electrons from NADH, via FMN and iron-sulfur (Fe-S) centers, to quinones in the respiratory chain. The immediate electron acceptor for the enzyme in this species is believed to be ubiquinone. Couples the redox reaction to proton translocation (for every two electrons transferred, four hydrogen ions are translocated across the cytoplasmic membrane), and thus conserves the redox energy in a proton gradient. The sequence is that of NADH-quinone oxidoreductase subunit C/D from Escherichia coli O6:H1 (strain CFT073 / ATCC 700928 / UPEC).